The following is a 69-amino-acid chain: Large ribosomal subunit protein bL31 (69 aa).

Residues Cys16, Cys18, Cys37, and Cys40 each contribute to the Zn(2+) site.

It belongs to the bacterial ribosomal protein bL31 family. Type A subfamily. As to quaternary structure, part of the 50S ribosomal subunit. The cofactor is Zn(2+).

In terms of biological role, binds the 23S rRNA. The sequence is that of Large ribosomal subunit protein bL31 from Syntrophotalea carbinolica (strain DSM 2380 / NBRC 103641 / GraBd1) (Pelobacter carbinolicus).